Here is a 369-residue protein sequence, read N- to C-terminus: 2-aminoethylphosphonate--pyruvate transaminase (369 aa).

The residue at position 193 (Lys193) is an N6-(pyridoxal phosphate)lysine.

This sequence belongs to the class-V pyridoxal-phosphate-dependent aminotransferase family. PhnW subfamily. In terms of assembly, homodimer. The cofactor is pyridoxal 5'-phosphate.

The catalysed reaction is (2-aminoethyl)phosphonate + pyruvate = phosphonoacetaldehyde + L-alanine. Functionally, involved in phosphonate degradation. The sequence is that of 2-aminoethylphosphonate--pyruvate transaminase from Burkholderia pseudomallei (strain 1106a).